Here is a 472-residue protein sequence, read N- to C-terminus: MALHLRSSFSSKSTLLNILRHNLGFGSRSHVTRHIRQILPHDPPLRGSQNPISRLCNTMAEPETLSSFVQHEYANNHQVMDFPGGKVAFTPEIQFISESDKERVPCYRVLDDNGQLITNSQFVQVSEEVAVKIYSDMVTLQIMDNIFYEAQRQGRLSFYATAIGEEAINIASAAALTPQDVIFPQYREPGVLLWRGFTLQEFANQCFGNKSDYGKGRQMPVHYGSNKLNYFTVSATIATQLPNAVGAAYSLKMDKKDACAVTYFGDGGTSEGDFHAALNIAAVMEAPVLFICRNNGWAISTPTSDQFRSDGVVVKGRAYGIRSIRVDGNDALAMYSAVHTAREMAIREQRPILIEALTYRVGHHSTSDDSTRYRSAGEIEWWNKARNPLSRFRTWIESNGWWSDKTESDLRSRIKKEMLEALRVAEKTEKPNLQNMFSDVYDVPPSNLREQELLVRQTINSHPQDYPSDVPL.

Residue 185 to 187 (QYR) participates in thiamine diphosphate binding. The K(+) site is built by S234, T239, and Q240.

This sequence belongs to the BCKDHA family. In terms of assembly, heterotetramer of alpha and beta chains. The cofactor is thiamine diphosphate.

Its subcellular location is the mitochondrion matrix. It catalyses the reaction N(6)-[(R)-lipoyl]-L-lysyl-[protein] + 3-methyl-2-oxobutanoate + H(+) = N(6)-[(R)-S(8)-2-methylpropanoyldihydrolipoyl]-L-lysyl-[protein] + CO2. In terms of biological role, the branched-chain alpha-keto dehydrogenase complex catalyzes the overall conversion of alpha-keto acids to acyl-CoA and CO(2). It contains multiple copies of three enzymatic components: branched-chain alpha-keto acid decarboxylase (E1), lipoamide acyltransferase (E2) and lipoamide dehydrogenase (E3). This chain is 2-oxoisovalerate dehydrogenase subunit alpha 2, mitochondrial, found in Arabidopsis thaliana (Mouse-ear cress).